A 395-amino-acid chain; its full sequence is Altered inheritance of mitochondria protein 39, mitochondrial (395 aa).

A helical membrane pass occupies residues 161-181 (IFGGIFGVIIGYSLIYKVIYL).

It belongs to the AIM39 family.

Its subcellular location is the mitochondrion membrane. The chain is Altered inheritance of mitochondria protein 39, mitochondrial (AIM39) from Saccharomyces cerevisiae (strain YJM789) (Baker's yeast).